The primary structure comprises 218 residues: Thiamine-phosphate synthase (218 aa).

Residues 43–47 and asparagine 75 each bind 4-amino-2-methyl-5-(diphosphooxymethyl)pyrimidine; that span reads QLRDK. Positions 76 and 95 each coordinate Mg(2+). 4-amino-2-methyl-5-(diphosphooxymethyl)pyrimidine is bound at residue serine 114. 141–143 serves as a coordination point for 2-[(2R,5Z)-2-carboxy-4-methylthiazol-5(2H)-ylidene]ethyl phosphate; sequence TPT. Lysine 144 contacts 4-amino-2-methyl-5-(diphosphooxymethyl)pyrimidine. Glycine 172 is a 2-[(2R,5Z)-2-carboxy-4-methylthiazol-5(2H)-ylidene]ethyl phosphate binding site.

Belongs to the thiamine-phosphate synthase family. Mg(2+) is required as a cofactor.

It carries out the reaction 2-[(2R,5Z)-2-carboxy-4-methylthiazol-5(2H)-ylidene]ethyl phosphate + 4-amino-2-methyl-5-(diphosphooxymethyl)pyrimidine + 2 H(+) = thiamine phosphate + CO2 + diphosphate. The catalysed reaction is 2-(2-carboxy-4-methylthiazol-5-yl)ethyl phosphate + 4-amino-2-methyl-5-(diphosphooxymethyl)pyrimidine + 2 H(+) = thiamine phosphate + CO2 + diphosphate. It catalyses the reaction 4-methyl-5-(2-phosphooxyethyl)-thiazole + 4-amino-2-methyl-5-(diphosphooxymethyl)pyrimidine + H(+) = thiamine phosphate + diphosphate. The protein operates within cofactor biosynthesis; thiamine diphosphate biosynthesis; thiamine phosphate from 4-amino-2-methyl-5-diphosphomethylpyrimidine and 4-methyl-5-(2-phosphoethyl)-thiazole: step 1/1. In terms of biological role, condenses 4-methyl-5-(beta-hydroxyethyl)thiazole monophosphate (THZ-P) and 2-methyl-4-amino-5-hydroxymethyl pyrimidine pyrophosphate (HMP-PP) to form thiamine monophosphate (TMP). The polypeptide is Thiamine-phosphate synthase (Thermobifida fusca (strain YX)).